The chain runs to 356 residues: Serpentine receptor class epsilon-29 (356 aa).

Transmembrane regions (helical) follow at residues 29-49, 61-81, 119-139, 161-181, 190-210, 251-271, and 281-301; these read IVELFSYLICAYILTLNIYII, ILAIPLFGIWFELIIGKLITI, LLIFGGFLQWHYMFTIIFGVL, LFIPLFLTVISQFLSISTSLA, FLAQLPWIICCPFSAMAYFFV, LVFVVLSCIALCGIGITALFY, and FVENFLFLHPYLSCLTAIFSV.

Belongs to the nematode receptor-like protein sre family.

Its subcellular location is the membrane. This Caenorhabditis elegans protein is Serpentine receptor class epsilon-29 (sre-29).